Here is a 244-residue protein sequence, read N- to C-terminus: 7-cyano-7-deazaguanine synthase (244 aa).

14-24 (FSGGQDSATCV) serves as a coordination point for ATP. Zn(2+)-binding residues include C202, C217, C220, and C223.

Belongs to the QueC family. The cofactor is Zn(2+).

The catalysed reaction is 7-carboxy-7-deazaguanine + NH4(+) + ATP = 7-cyano-7-deazaguanine + ADP + phosphate + H2O + H(+). Its pathway is purine metabolism; 7-cyano-7-deazaguanine biosynthesis. In terms of biological role, catalyzes the ATP-dependent conversion of 7-carboxy-7-deazaguanine (CDG) to 7-cyano-7-deazaguanine (preQ(0)). The sequence is that of 7-cyano-7-deazaguanine synthase from Burkholderia thailandensis (strain ATCC 700388 / DSM 13276 / CCUG 48851 / CIP 106301 / E264).